The following is a 224-amino-acid chain: V-type ATP synthase subunit D (224 aa).

The span at alanine 205 to isoleucine 214 shows a compositional bias: basic and acidic residues. Residues alanine 205–aspartate 224 are disordered. The span at glutamine 215 to aspartate 224 shows a compositional bias: polar residues.

This sequence belongs to the V-ATPase D subunit family.

Produces ATP from ADP in the presence of a proton gradient across the membrane. In Deinococcus deserti (strain DSM 17065 / CIP 109153 / LMG 22923 / VCD115), this protein is V-type ATP synthase subunit D.